A 60-amino-acid polypeptide reads, in one-letter code: UPF0434 protein YE1549 (60 aa).

Belongs to the UPF0434 family.

The chain is UPF0434 protein YE1549 from Yersinia enterocolitica serotype O:8 / biotype 1B (strain NCTC 13174 / 8081).